The primary structure comprises 202 residues: Orotate phosphoribosyltransferase (202 aa).

5-phospho-alpha-D-ribose 1-diphosphate is bound by residues lysine 93 and 113–121; that span reads EDIITTGGS. Orotate-binding residues include threonine 117 and arginine 145.

The protein belongs to the purine/pyrimidine phosphoribosyltransferase family. PyrE subfamily. Homodimer. It depends on Mg(2+) as a cofactor.

It catalyses the reaction orotidine 5'-phosphate + diphosphate = orotate + 5-phospho-alpha-D-ribose 1-diphosphate. The protein operates within pyrimidine metabolism; UMP biosynthesis via de novo pathway; UMP from orotate: step 1/2. In terms of biological role, catalyzes the transfer of a ribosyl phosphate group from 5-phosphoribose 1-diphosphate to orotate, leading to the formation of orotidine monophosphate (OMP). The protein is Orotate phosphoribosyltransferase of Campylobacter jejuni subsp. jejuni serotype O:2 (strain ATCC 700819 / NCTC 11168).